Reading from the N-terminus, the 363-residue chain is Probable endopolygalacturonase B (363 aa).

The signal sequence occupies residues 1–20 (MQLLQSSVIAATVGAALVAA). A propeptide spanning residues 21–28 (VPVELEAR) is cleaved from the precursor. Cys31 and Cys46 are oxidised to a cystine. PbH1 repeat units follow at residues 158–187 (SDNL…DVGS), 188–209 (STYI…AINS), 210–230 (GSHI…SIGS), 239–260 (VEDV…RIKT), 268–290 (VSNV…IVEQ), and 302–347 (TNGI…SITG). N-linked (GlcNAc...) asparagine glycosylation is present at Asn162. The Proton donor role is filled by Asp202. Cys204 and Cys220 are oxidised to a cystine. His224 is a catalytic residue. 2 disulfides stabilise this stretch: Cys330/Cys335 and Cys354/Cys363.

The protein belongs to the glycosyl hydrolase 28 family.

It is found in the secreted. The catalysed reaction is (1,4-alpha-D-galacturonosyl)n+m + H2O = (1,4-alpha-D-galacturonosyl)n + (1,4-alpha-D-galacturonosyl)m.. Its function is as follows. Involved in maceration and soft-rotting of plant tissue. Hydrolyzes the 1,4-alpha glycosidic bonds of de-esterified pectate in the smooth region of the plant cell wall. This is Probable endopolygalacturonase B (pgaB) from Aspergillus flavus (strain ATCC 200026 / FGSC A1120 / IAM 13836 / NRRL 3357 / JCM 12722 / SRRC 167).